We begin with the raw amino-acid sequence, 419 residues long: Epothilone C/D epoxidase (419 aa).

The substrate site is built by alanine 180 and glycine 304. Cysteine 365 contacts heme.

This sequence belongs to the cytochrome P450 family. Requires heme as cofactor.

The enzyme catalyses epothilone C + 2 reduced [2Fe-2S]-[ferredoxin] + O2 + 2 H(+) = epothilone A + 2 oxidized [2Fe-2S]-[ferredoxin] + H2O. It carries out the reaction epothilone D + 2 reduced [2Fe-2S]-[ferredoxin] + O2 + 2 H(+) = epothilone B + 2 oxidized [2Fe-2S]-[ferredoxin] + H2O. It participates in secondary metabolite biosynthesis; epothilone biosynthesis. In terms of biological role, involved in the biosynthesis of epothilones, macrolactones which have a narrow anti-fungal spectrum and microtubule-stabilizing activity. Catalyzes the epoxidation of epothilones C and D to epothilones A and B, respectively. The protein is Epothilone C/D epoxidase (cyp167A1) of Sorangium cellulosum (Polyangium cellulosum).